The chain runs to 149 residues: 3-hydroxyacyl-[acyl-carrier-protein] dehydratase FabZ (149 aa).

His-53 is an active-site residue.

This sequence belongs to the thioester dehydratase family. FabZ subfamily.

The protein resides in the cytoplasm. It carries out the reaction a (3R)-hydroxyacyl-[ACP] = a (2E)-enoyl-[ACP] + H2O. In terms of biological role, involved in unsaturated fatty acids biosynthesis. Catalyzes the dehydration of short chain beta-hydroxyacyl-ACPs and long chain saturated and unsaturated beta-hydroxyacyl-ACPs. The polypeptide is 3-hydroxyacyl-[acyl-carrier-protein] dehydratase FabZ (Neisseria meningitidis serogroup B (strain ATCC BAA-335 / MC58)).